A 336-amino-acid polypeptide reads, in one-letter code: tRNA N6-adenosine threonylcarbamoyltransferase (336 aa).

The Fe cation site is built by H114 and H118. Substrate-binding positions include 136 to 140 (LVSGG), D169, G182, D186, and N275. Fe cation is bound at residue D301.

It belongs to the KAE1 / TsaD family. Fe(2+) serves as cofactor.

It is found in the cytoplasm. It catalyses the reaction L-threonylcarbamoyladenylate + adenosine(37) in tRNA = N(6)-L-threonylcarbamoyladenosine(37) in tRNA + AMP + H(+). Its function is as follows. Required for the formation of a threonylcarbamoyl group on adenosine at position 37 (t(6)A37) in tRNAs that read codons beginning with adenine. Is involved in the transfer of the threonylcarbamoyl moiety of threonylcarbamoyl-AMP (TC-AMP) to the N6 group of A37, together with TsaE and TsaB. TsaD likely plays a direct catalytic role in this reaction. This chain is tRNA N6-adenosine threonylcarbamoyltransferase, found in Streptococcus pneumoniae (strain Taiwan19F-14).